A 408-amino-acid polypeptide reads, in one-letter code: Multidrug resistance protein MdtG (408 aa).

The next 11 membrane-spanning stretches (helical) occupy residues 16–36 (LIVA…VMPF), 58–78 (IVFS…GGLA), 92–112 (LGMG…QFLI), 115–135 (ALLG…ATQV), 146–166 (TLST…GLLA), 173–193 (PVFF…LLCI), 224–244 (LFVT…ILTL), 253–273 (VGNI…AALL), 290–310 (ILIA…FVQT), 319–339 (FLLG…LVYN), and 378–398 (AVFL…WNSL).

It belongs to the major facilitator superfamily. DHA1 family. MdtG (TC 2.A.1.2.20) subfamily.

The protein localises to the cell inner membrane. Confers resistance to fosfomycin and deoxycholate. The polypeptide is Multidrug resistance protein MdtG (Escherichia fergusonii (strain ATCC 35469 / DSM 13698 / CCUG 18766 / IAM 14443 / JCM 21226 / LMG 7866 / NBRC 102419 / NCTC 12128 / CDC 0568-73)).